We begin with the raw amino-acid sequence, 622 residues long: Chaperone protein HscA homolog (622 aa).

It belongs to the heat shock protein 70 family.

Chaperone involved in the maturation of iron-sulfur cluster-containing proteins. Has a low intrinsic ATPase activity which is markedly stimulated by HscB. The sequence is that of Chaperone protein HscA homolog from Burkholderia thailandensis (strain ATCC 700388 / DSM 13276 / CCUG 48851 / CIP 106301 / E264).